The chain runs to 289 residues: Caffeoylpyruvate hydrolase (289 aa).

Positions 140, 142, and 171 each coordinate a divalent metal cation.

The protein belongs to the FAH family. As to quaternary structure, homodimer. Mg(2+) is required as a cofactor. Requires Mn(2+) as cofactor.

It catalyses the reaction (E)-caffeoylpyruvate + H2O = (E)-caffeate + pyruvate + H(+). Its pathway is secondary metabolite biosynthesis. Caffeoylpyruvate hydrolase; part of the gene cluster that mediates the fungal bioluminescence cycle. Involved in the recycling of oxyluciferin, a pyruvic acid adduct of caffeic acid, to caffeic acid. The fungal bioluminescence cycle begins with the hispidin synthetase that catalyzes the formation of hispidin which is further hydroxylated by the hispidin-3-hydroxylase, yielding the fungal luciferin 3-hydroxyhispidin. The luciferase then produces an endoperoxide as a high-energy intermediate with decomposition that yields oxyluciferin (also known as caffeoylpyruvate) and light emission. Oxyluciferin can be recycled to caffeic acid by caffeoylpyruvate hydrolase. This chain is Caffeoylpyruvate hydrolase, found in Neonothopanus nambi (Agaricus nambi).